Here is a 553-residue protein sequence, read N- to C-terminus: CTP synthase (553 aa).

The interval 1–266 is amidoligase domain; that stretch reads MKYIFVTGGV…GKAVEDLLGL (266 aa). Ser-12 lines the CTP pocket. Ser-12 provides a ligand contact to UTP. 13-18 contacts ATP; the sequence is SLGKGV. Tyr-53 contacts L-glutamine. Position 70 (Asp-70) interacts with ATP. Residues Asp-70 and Glu-140 each coordinate Mg(2+). CTP is bound by residues 147–149, 187–192, and Lys-223; these read DIE and KTKPTQ. UTP is bound by residues 187–192 and Lys-223; that span reads KTKPTQ. Positions 291 to 541 constitute a Glutamine amidotransferase type-1 domain; the sequence is TIAIAGKYTE…VAAALQSGPS (251 aa). Gly-353 contributes to the L-glutamine binding site. Cys-380 (nucleophile; for glutamine hydrolysis) is an active-site residue. Residues 381-384, Glu-404, and Arg-464 contribute to the L-glutamine site; that span reads LGMQ. Active-site residues include His-514 and Glu-516.

The protein belongs to the CTP synthase family. In terms of assembly, homotetramer.

It carries out the reaction UTP + L-glutamine + ATP + H2O = CTP + L-glutamate + ADP + phosphate + 2 H(+). It catalyses the reaction L-glutamine + H2O = L-glutamate + NH4(+). The enzyme catalyses UTP + NH4(+) + ATP = CTP + ADP + phosphate + 2 H(+). The protein operates within pyrimidine metabolism; CTP biosynthesis via de novo pathway; CTP from UDP: step 2/2. With respect to regulation, allosterically activated by GTP, when glutamine is the substrate; GTP has no effect on the reaction when ammonia is the substrate. The allosteric effector GTP functions by stabilizing the protein conformation that binds the tetrahedral intermediate(s) formed during glutamine hydrolysis. Inhibited by the product CTP, via allosteric rather than competitive inhibition. Its function is as follows. Catalyzes the ATP-dependent amination of UTP to CTP with either L-glutamine or ammonia as the source of nitrogen. Regulates intracellular CTP levels through interactions with the four ribonucleotide triphosphates. The protein is CTP synthase of Deinococcus geothermalis (strain DSM 11300 / CIP 105573 / AG-3a).